The following is a 259-amino-acid chain: Proteasome subunit alpha (259 aa).

This sequence belongs to the peptidase T1A family. As to quaternary structure, the 20S proteasome core is composed of 14 alpha and 14 beta subunits that assemble into four stacked heptameric rings, resulting in a barrel-shaped structure. The two inner rings, each composed of seven catalytic beta subunits, are sandwiched by two outer rings, each composed of seven alpha subunits. The catalytic chamber with the active sites is on the inside of the barrel. Has a gated structure, the ends of the cylinder being occluded by the N-termini of the alpha-subunits. Is capped at one or both ends by the proteasome regulatory ATPase, PAN.

The protein resides in the cytoplasm. The formation of the proteasomal ATPase PAN-20S proteasome complex, via the docking of the C-termini of PAN into the intersubunit pockets in the alpha-rings, triggers opening of the gate for substrate entry. Interconversion between the open-gate and close-gate conformations leads to a dynamic regulation of the 20S proteasome proteolysis activity. In terms of biological role, component of the proteasome core, a large protease complex with broad specificity involved in protein degradation. In Methanococcus vannielii (strain ATCC 35089 / DSM 1224 / JCM 13029 / OCM 148 / SB), this protein is Proteasome subunit alpha.